A 184-amino-acid chain; its full sequence is NADH-quinone oxidoreductase subunit B (184 aa).

4 residues coordinate [4Fe-4S] cluster: cysteine 37, cysteine 38, cysteine 103, and cysteine 132.

The protein belongs to the complex I 20 kDa subunit family. As to quaternary structure, NDH-1 is composed of 14 different subunits. Subunits NuoB, C, D, E, F, and G constitute the peripheral sector of the complex. [4Fe-4S] cluster serves as cofactor.

The protein localises to the cell membrane. The catalysed reaction is a quinone + NADH + 5 H(+)(in) = a quinol + NAD(+) + 4 H(+)(out). In terms of biological role, NDH-1 shuttles electrons from NADH, via FMN and iron-sulfur (Fe-S) centers, to quinones in the respiratory chain. The immediate electron acceptor for the enzyme in this species is believed to be a menaquinone. Couples the redox reaction to proton translocation (for every two electrons transferred, four hydrogen ions are translocated across the cytoplasmic membrane), and thus conserves the redox energy in a proton gradient. The protein is NADH-quinone oxidoreductase subunit B of Beutenbergia cavernae (strain ATCC BAA-8 / DSM 12333 / CCUG 43141 / JCM 11478 / NBRC 16432 / NCIMB 13614 / HKI 0122).